Here is a 306-residue protein sequence, read N- to C-terminus: Protoheme IX farnesyltransferase (306 aa).

The next 9 membrane-spanning stretches (helical) occupy residues 32 to 52, 58 to 78, 103 to 123, 126 to 146, 153 to 173, 180 to 200, 227 to 247, 249 to 269, and 278 to 298; these read VVAL…PGAL, IPAM…NHIV, NAIV…YALV, LTAF…TMYL, NITI…TAMT, ALLL…ALAI, ILLY…VGMS, WLYL…AWQL, and AMAT…ILLL.

It belongs to the UbiA prenyltransferase family. Protoheme IX farnesyltransferase subfamily.

The protein resides in the cell inner membrane. It carries out the reaction heme b + (2E,6E)-farnesyl diphosphate + H2O = Fe(II)-heme o + diphosphate. Its pathway is porphyrin-containing compound metabolism; heme O biosynthesis; heme O from protoheme: step 1/1. Its function is as follows. Converts heme B (protoheme IX) to heme O by substitution of the vinyl group on carbon 2 of heme B porphyrin ring with a hydroxyethyl farnesyl side group. This is Protoheme IX farnesyltransferase from Colwellia psychrerythraea (strain 34H / ATCC BAA-681) (Vibrio psychroerythus).